A 1519-amino-acid polypeptide reads, in one-letter code: Putative lipoprotein YghJ (1519 aa).

The signal sequence occupies residues 1 to 23 (MNKKFKYKKSLLAAILSATLLAG). Disordered stretches follow at residues 22–107 (AGCD…GATC) and 226–247 (NAATDKAPSTHTSPVVPVTTPG). Cys-24 carries N-palmitoyl cysteine lipidation. Residue Cys-24 is the site of S-diacylglycerol cysteine attachment. Low complexity predominate over residues 31-42 (SSSDTPPVDSGT). Residues 51-77 (DPTPNPEPTPEPTPDPEPTPEPIPDPE) are compositionally biased toward pro residues. Residues 97-107 (GGSQRVTGATC) are compositionally biased toward polar residues. A compositionally biased stretch (low complexity) spans 234-247 (STHTSPVVPVTTPG). The Peptidase M60 domain maps to 1080–1380 (GNMQSTGLWA…MYAQLKEWAE (301 aa)). The disordered stretch occupies residues 1497 to 1519 (DLPKPEQGPETINQVTEHKMSAE).

The protein to V.cholerae AcfD (VC_0845).

The protein localises to the cell membrane. May be a substrate of the type II secretion system beta (T2SS-beta). The sequence is that of Putative lipoprotein YghJ (yghJ) from Escherichia coli O78:H11 (strain H10407 / ETEC).